A 40-amino-acid chain; its full sequence is Photosystem II reaction center protein Y (40 aa).

A helical transmembrane segment spans residues 4–22 (LLVITLPILAAIGWVTLNI).

This sequence belongs to the PsbY family. PSII is composed of 1 copy each of membrane proteins PsbA, PsbB, PsbC, PsbD, PsbE, PsbF, PsbH, PsbI, PsbJ, PsbK, PsbL, PsbM, PsbT, PsbX, PsbY, Psb30/Ycf12, peripheral proteins PsbO, CyanoQ (PsbQ), PsbU, PsbV and a large number of cofactors. It forms dimeric complexes.

Its subcellular location is the cellular thylakoid membrane. Loosely associated component of the core of photosystem II (PSII), it is not always seen in crystals. PSII is a light-driven water plastoquinone oxidoreductase, using light energy to abstract electrons from H(2)O, generating a proton gradient subsequently used for ATP formation. In Prochlorococcus marinus (strain SARG / CCMP1375 / SS120), this protein is Photosystem II reaction center protein Y.